A 175-amino-acid polypeptide reads, in one-letter code: Methylated-DNA--protein-cysteine methyltransferase (175 aa).

DNA is bound by residues Y115 and R127. C144 (nucleophile; methyl group acceptor) is an active-site residue.

It belongs to the MGMT family.

The protein localises to the nucleus. It catalyses the reaction a 6-O-methyl-2'-deoxyguanosine in DNA + L-cysteinyl-[protein] = S-methyl-L-cysteinyl-[protein] + a 2'-deoxyguanosine in DNA. The enzyme catalyses a 4-O-methyl-thymidine in DNA + L-cysteinyl-[protein] = a thymidine in DNA + S-methyl-L-cysteinyl-[protein]. In terms of biological role, involved in the cellular defense against the biological effects of O6-methylguanine (O6-MeG) and O4-methylthymine (O4-MeT) in DNA. Repairs the methylated nucleobase in DNA by stoichiometrically transferring the methyl group to a cysteine residue in the enzyme. This is a suicide reaction: the enzyme is irreversibly inactivated. In Candida albicans (strain SC5314 / ATCC MYA-2876) (Yeast), this protein is Methylated-DNA--protein-cysteine methyltransferase (MGT1).